A 184-amino-acid polypeptide reads, in one-letter code: NEDD8-conjugating enzyme UBC12 (184 aa).

One can recognise a UBC core domain in the interval 29 to 174 (PSLIRLKKDL…VNHSLRGNNI (146 aa)). C112 serves as the catalytic Glycyl thioester intermediate.

Belongs to the ubiquitin-conjugating enzyme family. UBC12 subfamily.

It catalyses the reaction [E1 NEDD8-activating enzyme]-S-[NEDD8 protein]-yl-L-cysteine + [E2 NEDD8-conjugating enzyme]-L-cysteine = [E1 NEDD8-activating enzyme]-L-cysteine + [E2 NEDD8-conjugating enzyme]-S-[NEDD8-protein]-yl-L-cysteine.. It participates in protein modification; protein neddylation. Functionally, accepts the ubiquitin-like protein NEDD8/RUB1 from the UBA3-ULA1 E1 complex and catalyzes its covalent attachment to other proteins. The protein is NEDD8-conjugating enzyme UBC12 (UBC12) of Kluyveromyces lactis (strain ATCC 8585 / CBS 2359 / DSM 70799 / NBRC 1267 / NRRL Y-1140 / WM37) (Yeast).